The primary structure comprises 743 residues: Fork head transcription factor 1 (743 aa).

In terms of domain architecture, FHA spans 39 to 94 (VTMGRKASNSSDCDVHLGDTKAISRQHAKIFYSFPNQRFEISVMGKNGAFVDGEFV). Disordered regions lie at residues 214–291 (QPPK…ATQK), 411–450 (GISA…LQNG), and 529–743 (QMQG…SSYT). Residues 221-230 (VSPSSIQRLS) are compositionally biased toward polar residues. Positions 291–385 (KPNLSYANLI…EGNFFRRTKK (95 aa)) form a DNA-binding region, fork-head. Positions 434-443 (SRGENVEDRP) are enriched in basic and acidic residues. Residues 529–539 (QMQGPQQVQQQ) show a composition bias toward low complexity. Residues 562–576 (NITSPSPSISVTQRP) show a composition bias toward polar residues. A compositionally biased stretch (low complexity) spans 614–624 (SAGPSSVRSSS). Composition is skewed to polar residues over residues 625-643 (YNST…QNLH), 670-686 (TGNQ…ASSF), and 695-726 (ENGS…NSSD).

It localises to the nucleus. Acts as a transcriptional activator for ribosomal protein genes (RPG) that contain a HomolE UAS (upstream activating sequence) in addition to a HomolD promoter element; HomolD plays the role of a TATA box in RPG promoters that do not contain a canonical TATA sequence. Binds to HomolE elements with consensus sequence 3'-ACCCTACCCT-5' (or its inverted form AGGGTAGGGT). This chain is Fork head transcription factor 1, found in Schizosaccharomyces pombe (strain 972 / ATCC 24843) (Fission yeast).